A 163-amino-acid chain; its full sequence is Small ribosomal subunit protein eS10A (163 aa).

Residues leucine 92 to asparagine 163 are disordered. Residues glycine 105 to glycine 116 show a composition bias toward gly residues.

This sequence belongs to the eukaryotic ribosomal protein eS10 family.

It localises to the cytoplasm. The protein is Small ribosomal subunit protein eS10A (RpS10a) of Drosophila melanogaster (Fruit fly).